Reading from the N-terminus, the 510-residue chain is Internal alternative NAD(P)H-ubiquinone oxidoreductase A1, mitochondrial (510 aa).

Residues 1–48 (MLWIKNLARISQTTSSSVGNVFRNPESYTLSSRFCTALQKQQVTDTVQ) constitute a mitochondrion transit peptide. 75–105 (RVLVLGSGWAGCRVLKGIDTSIYDVVCVSPR) is an FAD binding site. 242–278 (LHCVVVGGGPTGVEFSGELSDFIMKDVRQRYSHVKDD) is a binding site for NAD(+). Residues 501-510 (FVFGRDISRI) carry the Microbody targeting signal motif.

It belongs to the NADH dehydrogenase family. FAD is required as a cofactor. Expressed in seedlings, cotyledons, young leaves, stems and flowers and, to a lower extent, in roots and buds.

It is found in the mitochondrion inner membrane. The protein localises to the peroxisome. The enzyme catalyses a quinone + NADH + H(+) = a quinol + NAD(+). The catalysed reaction is a ubiquinone + NADH + H(+) = a ubiquinol + NAD(+). Alternative NADH-ubiquinone oxidoreductase which catalyzes the oxidation of mitochondrial NADH does not translocate protons across the inner mitochondrial membrane. The protein is Internal alternative NAD(P)H-ubiquinone oxidoreductase A1, mitochondrial (NDA1) of Arabidopsis thaliana (Mouse-ear cress).